The following is a 246-amino-acid chain: 4'-phosphopantetheinyl transferase Svp (246 aa).

Residues 223–232 are compositionally biased toward low complexity; sequence AGTAEESAEG. Residues 223 to 246 form a disordered region; that stretch reads AGTAEESAEGAGKEATADDRTAVP. The span at 233–246 shows a compositional bias: basic and acidic residues; sequence AGKEATADDRTAVP.

The protein belongs to the P-Pant transferase superfamily. Gsp/Sfp/HetI/AcpT family.

It catalyses the reaction apo-[ACP] + CoA = holo-[ACP] + adenosine 3',5'-bisphosphate + H(+). Its function is as follows. Transfers the 4'-phosphopantetheine moiety from coenzyme A to a Ser of an acyl-carrier-protein. The enzyme is able to transfer the cofactor to a broad range of enzymes with acyl- or peptidyl-carrier protein domains. This Streptomyces mobaraensis (Streptoverticillium mobaraense) protein is 4'-phosphopantetheinyl transferase Svp (svp).